Here is a 241-residue protein sequence, read N- to C-terminus: Carboxy-S-adenosyl-L-methionine synthase (241 aa).

Residues Tyr38, 63-65 (GCS), 88-89 (DN), 116-117 (DI), Asn131, and Arg198 contribute to the S-adenosyl-L-methionine site.

Belongs to the class I-like SAM-binding methyltransferase superfamily. Cx-SAM synthase family. As to quaternary structure, homodimer.

It catalyses the reaction prephenate + S-adenosyl-L-methionine = carboxy-S-adenosyl-L-methionine + 3-phenylpyruvate + H2O. Functionally, catalyzes the conversion of S-adenosyl-L-methionine (SAM) to carboxy-S-adenosyl-L-methionine (Cx-SAM). The sequence is that of Carboxy-S-adenosyl-L-methionine synthase from Haemophilus influenzae (strain PittEE).